The chain runs to 692 residues: Protein hook (692 aa).

The 118-residue stretch at 6–123 (SEMYYSLLEW…RLLQLVLGCA (118 aa)) folds into the Calponin-homology (CH) domain. The stretch at 135–576 (EIMGLEEELQ…YQSKVIQLET (442 aa)) forms a coiled coil. The segment at 161-180 (AGERSPSSSASGGAGSGGAV) is disordered.

The protein belongs to the hook family. Homodimer. Interacts with microtubules via its N-terminus.

It is found in the cytoplasm. It localises to the cytoskeleton. Its subcellular location is the endosome. The protein localises to the synapse. Its function is as follows. Involved in endocytic trafficking by stabilizing organelles of the endocytic pathway. Probably acts as a cytoskeletal linker protein required to tether endosome vesicles to the cytoskeleton. Involved in modulation of endocytosis at stages required for down-regulation of membrane proteins that control synapse size. Not involved in synaptic vesicle recycling. Required in R7 cells for boss endocytosis into multivesicular bodies (MVBs). Has a role in regulating adult longevity. The sequence is that of Protein hook from Drosophila willistoni (Fruit fly).